We begin with the raw amino-acid sequence, 522 residues long: F-box only protein 7 (522 aa).

The tract at residues 1-88 is ubiquitin-like; the sequence is MRLRVRLLKR…QDDIPAPNIP (88 aa). The interval 85-144 is disordered; that stretch reads PNIPSSTDSEHSSLQNNEQPSLATSSNQTSMQDEQPSDSFQGQAAQSGVWNDDSMLGPSQ. Positions 87–133 are enriched in polar residues; sequence IPSSTDSEHSSLQNNEQPSLATSSNQTSMQDEQPSDSFQGQAAQSGV. An important for interaction with PINK1 region spans residues 92-129; the sequence is DSEHSSLQNNEQPSLATSSNQTSMQDEQPSDSFQGQAA. Positions 129–169 are important for interaction with CDK6; it reads AQSGVWNDDSMLGPSQNFEAESIQDNAHMAEGTGFYPSEPM. An important for dimerization and interaction with PSMF1 region spans residues 180–324; it reads PHSLETLYQS…PLLAFTRQAL (145 aa). An F-box domain is found at 329 to 375; that stretch reads VFGLVVLPLELKLRIFRLLDVRSVLSLSAVCRDLFTASNDPLLWRFL. Residues 381–522 are important for interaction with CDK6; it reads RDNTVRVQDT…RPTDGRLSFM (142 aa). An omega-N-methylarginine mark is found at arginine 432 and arginine 451. Residues 481–484 carry the RFDP motif motif; that stretch reads RFDP. The interval 483 to 522 is disordered; it reads DPVGPLPGPNPILPGRGGPNDRFPFRPSRGRPTDGRLSFM. Arginine 518 carries the asymmetric dimethylarginine modification.

In terms of assembly, part of the SCF (SKP1-CUL1-F-box) E3 ubiquitin-protein ligase complex SCF(FBXO7) formed of CUL1, SKP1, RBX1 and FBXO7. Interacts via its C-terminal proline-rich region with DLGAP5. Interacts with BIRC2. Interacts with CDK6 and promotes its interaction with D-type cyclin. Interacts with PSMF1. Interacts (via the N-terminal Ubl domain) with PRKN. Interact (via N-terminal region) with PINK1. As to quaternary structure, interact (via N-terminal region) with PINK1.

It is found in the cytoplasm. The protein resides in the nucleus. The protein localises to the mitochondrion. It localises to the cytosol. The protein operates within protein modification; protein ubiquitination. Substrate recognition component of a SCF (SKP1-CUL1-F-box protein) E3 ubiquitin-protein ligase complex which mediates the ubiquitination and subsequent proteasomal degradation of target proteins and plays a role in several biological processes such as cell cycle, cell proliferation, or maintenance of chromosome stability. Recognizes and ubiquitinates BIRC2 and the cell cycle regulator DLGAP5. Plays a role downstream of PINK1 in the clearance of damaged mitochondria via selective autophagy (mitophagy) by targeting PRKN to dysfunctional depolarized mitochondria. Promotes MFN1 ubiquitination. Mediates the ubiquitination and proteasomal degradation of UXT isoform 2, thereby impairing the NF-kappa-B signaling pathway. Inhibits NF-kappa-B pathway also by promoting the ubiquitination of TRAF2. Affects the assembly state and activity of the proteasome in the cells including neurons by ubiquitinating the proteasomal subunit PSMA2 via 'Lys-63'-linked polyubiquitin chains. Promotes 'Lys-48'-linked polyubiquitination SIRT7, leading to the hydrogen peroxide-induced cell death. This Homo sapiens (Human) protein is F-box only protein 7 (FBXO7).